We begin with the raw amino-acid sequence, 279 residues long: 3-methyl-2-oxobutanoate hydroxymethyltransferase (279 aa).

Residues D43 and D82 each contribute to the Mg(2+) site. 3-methyl-2-oxobutanoate contacts are provided by residues 43 to 44, D82, and K112; that span reads DS. E114 serves as a coordination point for Mg(2+). Catalysis depends on E181, which acts as the Proton acceptor.

It belongs to the PanB family. In terms of assembly, homodecamer; pentamer of dimers. It depends on Mg(2+) as a cofactor.

It localises to the cytoplasm. It catalyses the reaction 3-methyl-2-oxobutanoate + (6R)-5,10-methylene-5,6,7,8-tetrahydrofolate + H2O = 2-dehydropantoate + (6S)-5,6,7,8-tetrahydrofolate. It functions in the pathway cofactor biosynthesis; (R)-pantothenate biosynthesis; (R)-pantoate from 3-methyl-2-oxobutanoate: step 1/2. Its function is as follows. Catalyzes the reversible reaction in which hydroxymethyl group from 5,10-methylenetetrahydrofolate is transferred onto alpha-ketoisovalerate to form ketopantoate. This is 3-methyl-2-oxobutanoate hydroxymethyltransferase from Lysinibacillus sphaericus (strain C3-41).